Reading from the N-terminus, the 255-residue chain is Indole-3-glycerol phosphate synthase (255 aa).

The protein belongs to the TrpC family.

It catalyses the reaction 1-(2-carboxyphenylamino)-1-deoxy-D-ribulose 5-phosphate + H(+) = (1S,2R)-1-C-(indol-3-yl)glycerol 3-phosphate + CO2 + H2O. It functions in the pathway amino-acid biosynthesis; L-tryptophan biosynthesis; L-tryptophan from chorismate: step 4/5. The sequence is that of Indole-3-glycerol phosphate synthase from Streptococcus pneumoniae serotype 2 (strain D39 / NCTC 7466).